A 308-amino-acid chain; its full sequence is Ribosomal protein uL3 glutamine methyltransferase (308 aa).

It belongs to the protein N5-glutamine methyltransferase family. PrmB subfamily.

It catalyses the reaction L-glutaminyl-[ribosomal protein uL3] + S-adenosyl-L-methionine = N(5)-methyl-L-glutaminyl-[ribosomal protein uL3] + S-adenosyl-L-homocysteine + H(+). In terms of biological role, methylates large ribosomal subunit protein uL3 on a specific glutamine residue. The sequence is that of Ribosomal protein uL3 glutamine methyltransferase from Xanthomonas campestris pv. campestris (strain ATCC 33913 / DSM 3586 / NCPPB 528 / LMG 568 / P 25).